The chain runs to 132 residues: Large ribosomal subunit protein uL22c (132 aa).

Belongs to the universal ribosomal protein uL22 family. As to quaternary structure, part of the 50S ribosomal subunit.

It localises to the plastid. The protein resides in the chloroplast. In terms of biological role, this protein binds specifically to 23S rRNA. Its function is as follows. The globular domain of the protein is located near the polypeptide exit tunnel on the outside of the subunit, while an extended beta-hairpin is found that lines the wall of the exit tunnel in the center of the 70S ribosome. The chain is Large ribosomal subunit protein uL22c (rpl22) from Populus trichocarpa (Western balsam poplar).